A 295-amino-acid polypeptide reads, in one-letter code: uncharacterized protein (295 aa).

The first 19 residues, 1 to 19 (MFRKFLFIPLLIVTSLVKA), serve as a signal peptide directing secretion. The disordered stretch occupies residues 274-295 (KRNNPPLKNNNAKSKNSYETHK). Low complexity predominate over residues 276 to 288 (NNPPLKNNNAKSK).

This is an uncharacterized protein from Rickettsia typhi (strain ATCC VR-144 / Wilmington).